Reading from the N-terminus, the 98-residue chain is Small ribosomal subunit protein bS6 (98 aa).

Belongs to the bacterial ribosomal protein bS6 family.

In terms of biological role, binds together with bS18 to 16S ribosomal RNA. The polypeptide is Small ribosomal subunit protein bS6 (Lacticaseibacillus paracasei (strain ATCC 334 / BCRC 17002 / CCUG 31169 / CIP 107868 / KCTC 3260 / NRRL B-441) (Lactobacillus paracasei)).